A 216-amino-acid polypeptide reads, in one-letter code: Adenylate kinase (216 aa).

Position 10–15 (10–15) interacts with ATP; that stretch reads GAGKGT. The NMP stretch occupies residues 30 to 59; that stretch reads STGDIFRYNIKQGTELGKKAKSYMDQGLLV. AMP is bound by residues threonine 31, arginine 36, 57-59, 85-88, and glutamine 92; these read LLV and GFPR. An LID region spans residues 126–163; that stretch reads GRRICRECGATFHVQYNPSTKGALCDQCGGELYQRDDD. Arginine 127 lines the ATP pocket. Positions 130 and 133 each coordinate Zn(2+). ATP is bound at residue 136-137; sequence TF. Residues cysteine 150 and cysteine 153 each contribute to the Zn(2+) site. Positions 160 and 171 each coordinate AMP. Lysine 199 is an ATP binding site.

It belongs to the adenylate kinase family. In terms of assembly, monomer.

Its subcellular location is the cytoplasm. The enzyme catalyses AMP + ATP = 2 ADP. Its pathway is purine metabolism; AMP biosynthesis via salvage pathway; AMP from ADP: step 1/1. In terms of biological role, catalyzes the reversible transfer of the terminal phosphate group between ATP and AMP. Plays an important role in cellular energy homeostasis and in adenine nucleotide metabolism. The polypeptide is Adenylate kinase (Alkaliphilus oremlandii (strain OhILAs) (Clostridium oremlandii (strain OhILAs))).